Here is a 262-residue protein sequence, read N- to C-terminus: tRNA pseudouridine synthase A (262 aa).

The Nucleophile role is filled by Asp51. Tyr109 is a binding site for substrate.

This sequence belongs to the tRNA pseudouridine synthase TruA family. In terms of assembly, homodimer.

It carries out the reaction uridine(38/39/40) in tRNA = pseudouridine(38/39/40) in tRNA. Functionally, formation of pseudouridine at positions 38, 39 and 40 in the anticodon stem and loop of transfer RNAs. The polypeptide is tRNA pseudouridine synthase A (Aliivibrio salmonicida (strain LFI1238) (Vibrio salmonicida (strain LFI1238))).